Reading from the N-terminus, the 547-residue chain is GMP synthase [glutamine-hydrolyzing] (547 aa).

One can recognise a Glutamine amidotransferase type-1 domain in the interval Lys-12–Asp-210. Cys-89 serves as the catalytic Nucleophile. Residues His-184 and Glu-186 contribute to the active site. The region spanning Trp-211–Arg-403 is the GMPS ATP-PPase domain. ATP is bound at residue Ser-238–Ser-244.

Homodimer.

The enzyme catalyses XMP + L-glutamine + ATP + H2O = GMP + L-glutamate + AMP + diphosphate + 2 H(+). It functions in the pathway purine metabolism; GMP biosynthesis; GMP from XMP (L-Gln route): step 1/1. Functionally, catalyzes the synthesis of GMP from XMP. In Ralstonia nicotianae (strain ATCC BAA-1114 / GMI1000) (Ralstonia solanacearum), this protein is GMP synthase [glutamine-hydrolyzing].